A 223-amino-acid polypeptide reads, in one-letter code: Putative archaetidylserine decarboxylase proenzyme (223 aa).

S183 functions as the Schiff-base intermediate with substrate; via pyruvic acid in the catalytic mechanism. At S183 the chain carries Pyruvic acid (Ser); by autocatalysis.

The protein belongs to the phosphatidylserine decarboxylase family. PSD-A subfamily. In terms of assembly, heterodimer of a large membrane-associated beta subunit and a small pyruvoyl-containing alpha subunit. Pyruvate serves as cofactor. Post-translationally, is synthesized initially as an inactive proenzyme. Formation of the active enzyme involves a self-maturation process in which the active site pyruvoyl group is generated from an internal serine residue via an autocatalytic post-translational modification. Two non-identical subunits are generated from the proenzyme in this reaction, and the pyruvate is formed at the N-terminus of the alpha chain, which is derived from the carboxyl end of the proenzyme. The post-translation cleavage follows an unusual pathway, termed non-hydrolytic serinolysis, in which the side chain hydroxyl group of the serine supplies its oxygen atom to form the C-terminus of the beta chain, while the remainder of the serine residue undergoes an oxidative deamination to produce ammonia and the pyruvoyl prosthetic group on the alpha chain.

It localises to the cell membrane. The catalysed reaction is archaetidylserine + H(+) = archaetidylethanolamine + CO2. Its function is as follows. Catalyzes the formation of archaetidylethanolamine (PtdEtn) from archaetidylserine (PtdSer). In Methanothermobacter thermautotrophicus (strain ATCC 29096 / DSM 1053 / JCM 10044 / NBRC 100330 / Delta H) (Methanobacterium thermoautotrophicum), this protein is Putative archaetidylserine decarboxylase proenzyme.